The sequence spans 152 residues: SsrA-binding protein (152 aa).

It belongs to the SmpB family.

The protein resides in the cytoplasm. Functionally, required for rescue of stalled ribosomes mediated by trans-translation. Binds to transfer-messenger RNA (tmRNA), required for stable association of tmRNA with ribosomes. tmRNA and SmpB together mimic tRNA shape, replacing the anticodon stem-loop with SmpB. tmRNA is encoded by the ssrA gene; the 2 termini fold to resemble tRNA(Ala) and it encodes a 'tag peptide', a short internal open reading frame. During trans-translation Ala-aminoacylated tmRNA acts like a tRNA, entering the A-site of stalled ribosomes, displacing the stalled mRNA. The ribosome then switches to translate the ORF on the tmRNA; the nascent peptide is terminated with the 'tag peptide' encoded by the tmRNA and targeted for degradation. The ribosome is freed to recommence translation, which seems to be the essential function of trans-translation. This Rickettsia peacockii (strain Rustic) protein is SsrA-binding protein.